Consider the following 247-residue polypeptide: Carboxy-S-adenosyl-L-methionine synthase (247 aa).

S-adenosyl-L-methionine-binding positions include Tyr39, 64-66, 89-90, 117-118, Asn132, and Arg199; these read GCS, DN, and DI.

This sequence belongs to the class I-like SAM-binding methyltransferase superfamily. Cx-SAM synthase family. Homodimer.

It catalyses the reaction prephenate + S-adenosyl-L-methionine = carboxy-S-adenosyl-L-methionine + 3-phenylpyruvate + H2O. Catalyzes the conversion of S-adenosyl-L-methionine (SAM) to carboxy-S-adenosyl-L-methionine (Cx-SAM). The polypeptide is Carboxy-S-adenosyl-L-methionine synthase (Escherichia fergusonii (strain ATCC 35469 / DSM 13698 / CCUG 18766 / IAM 14443 / JCM 21226 / LMG 7866 / NBRC 102419 / NCTC 12128 / CDC 0568-73)).